A 136-amino-acid polypeptide reads, in one-letter code: Small ribosomal subunit protein uS19 (136 aa).

Residues 117 to 136 are disordered; it reads VQHGDPGMGATRSSMFVPLK.

This sequence belongs to the universal ribosomal protein uS19 family.

Functionally, protein S19 forms a complex with S13 that binds strongly to the 16S ribosomal RNA. The polypeptide is Small ribosomal subunit protein uS19 (Methanobrevibacter smithii (strain ATCC 35061 / DSM 861 / OCM 144 / PS)).